We begin with the raw amino-acid sequence, 220 residues long: U1 small nuclear ribonucleoprotein C (220 aa).

Residues 4–36 (FFCDYCDVYLTHDSISVRKAHNSGRNHLRNVVD) form a Matrin-type zinc finger. The interval 197–220 (PLGGFPAGAPLPGAPPGYGPPGAK) is disordered. Residues 208–220 (PGAPPGYGPPGAK) show a composition bias toward pro residues.

It belongs to the U1 small nuclear ribonucleoprotein C family. U1 snRNP is composed of the 7 core Sm proteins B/B', D1, D2, D3, E, F and G that assemble in a heptameric protein ring on the Sm site of the small nuclear RNA to form the core snRNP, and at least 3 U1 snRNP-specific proteins U1-70K, U1-A and U1-C. U1-C interacts with U1 snRNA and the 5' splice-site region of the pre-mRNA.

It localises to the nucleus. In terms of biological role, component of the spliceosomal U1 snRNP, which is essential for recognition of the pre-mRNA 5' splice-site and the subsequent assembly of the spliceosome. U1-C is directly involved in initial 5' splice-site recognition for both constitutive and regulated alternative splicing. The interaction with the 5' splice-site seems to precede base-pairing between the pre-mRNA and the U1 snRNA. Stimulates commitment or early (E) complex formation by stabilizing the base pairing of the 5' end of the U1 snRNA and the 5' splice-site region. This Tuber melanosporum (strain Mel28) (Perigord black truffle) protein is U1 small nuclear ribonucleoprotein C.